A 73-amino-acid chain; its full sequence is Large ribosomal subunit protein bL31 (73 aa).

4 residues coordinate Zn(2+): C16, C18, C37, and C40.

This sequence belongs to the bacterial ribosomal protein bL31 family. Type A subfamily. As to quaternary structure, part of the 50S ribosomal subunit. It depends on Zn(2+) as a cofactor.

Functionally, binds the 23S rRNA. This chain is Large ribosomal subunit protein bL31, found in Pseudomonas fluorescens (strain ATCC BAA-477 / NRRL B-23932 / Pf-5).